Consider the following 356-residue polypeptide: Malate dehydrogenase, glyoxysomal (356 aa).

A glyoxysome-targeting transit peptide spans 1 to 36 (MEDAAAAARRMERLASHLRPPASQMEESPLLRGSNC). Residues 51-57 (GASGGIG) and aspartate 77 each bind NAD(+). Residues arginine 124 and arginine 130 each coordinate substrate. NAD(+) contacts are provided by residues asparagine 137 and 160 to 162 (ISN). Residues asparagine 162 and arginine 196 each contribute to the substrate site. The Proton acceptor role is filled by histidine 220. Position 271 (methionine 271) interacts with NAD(+).

Belongs to the LDH/MDH superfamily. MDH type 1 family. Homodimer.

The protein localises to the glyoxysome. The enzyme catalyses (S)-malate + NAD(+) = oxaloacetate + NADH + H(+). In Oryza sativa subsp. japonica (Rice), this protein is Malate dehydrogenase, glyoxysomal.